A 302-amino-acid chain; its full sequence is 3-methyl-2-oxobutanoate hydroxymethyltransferase 1 (302 aa).

The Mg(2+) site is built by aspartate 75 and aspartate 118. 3-methyl-2-oxobutanoate-binding positions include 75–76, aspartate 118, and lysine 147; that span reads DS. Position 149 (glutamate 149) interacts with Mg(2+). Residue glutamate 217 is the Proton acceptor of the active site.

The protein belongs to the PanB family. In terms of assembly, homodecamer; pentamer of dimers. Requires Mg(2+) as cofactor.

It localises to the cytoplasm. The enzyme catalyses 3-methyl-2-oxobutanoate + (6R)-5,10-methylene-5,6,7,8-tetrahydrofolate + H2O = 2-dehydropantoate + (6S)-5,6,7,8-tetrahydrofolate. It participates in cofactor biosynthesis; (R)-pantothenate biosynthesis; (R)-pantoate from 3-methyl-2-oxobutanoate: step 1/2. Its function is as follows. Catalyzes the reversible reaction in which hydroxymethyl group from 5,10-methylenetetrahydrofolate is transferred onto alpha-ketoisovalerate to form ketopantoate. The polypeptide is 3-methyl-2-oxobutanoate hydroxymethyltransferase 1 (Zymomonas mobilis subsp. mobilis (strain ATCC 31821 / ZM4 / CP4)).